Consider the following 103-residue polypeptide: Histone H4.2 (103 aa).

Gly residues predominate over residues 1–14 (MTGRGKGGKGLGKG). Residues 1–20 (MTGRGKGGKGLGKGGAKRHR) form a disordered region. At Lys6 the chain carries N6-acetyl-N6-methyllysine; alternate. 3 positions are modified to N6-methyllysine; alternate: Lys6, Lys9, and Lys13. Lys13 is subject to N6-acetyl-N6-methyllysine; alternate. Residues 17 to 21 (KRHRK) mediate DNA binding. Residue Lys92 is modified to N6-glutaryllysine.

Belongs to the histone H4 family. The nucleosome is a histone octamer containing two molecules each of H2A, H2B, H3 and H4 assembled in one H3-H4 heterotetramer and two H2A-H2B heterodimers. The octamer wraps approximately 147 bp of DNA. In terms of processing, glutarylation at Lys-92 (H4K91glu) destabilizes nucleosomes by promoting dissociation of the H2A-H2B dimers from nucleosomes.

The protein resides in the nucleus. Its subcellular location is the chromosome. Core component of nucleosome. Nucleosomes wrap and compact DNA into chromatin, limiting DNA accessibility to the cellular machineries which require DNA as a template. Histones thereby play a central role in transcription regulation, DNA repair, DNA replication and chromosomal stability. DNA accessibility is regulated via a complex set of post-translational modifications of histones, also called histone code, and nucleosome remodeling. The polypeptide is Histone H4.2 (H4.2) (Talaromyces funiculosus (Fruitlet core rot fungus)).